The chain runs to 99 residues: Pyruvate synthase subunit PorD (99 aa).

2 4Fe-4S ferredoxin-type domains span residues 32 to 60 (MRPILHKEKCIDCMFCWLYCPDQAIIQEG) and 61 to 91 (GIMKGFNYDYCKGCGLCANVCPKQAIEMRPE). The [4Fe-4S] cluster site is built by Cys41, Cys44, Cys47, Cys51, Cys71, Cys74, Cys77, and Cys81.

In terms of assembly, heterotetramer of one alpha, one beta, one delta and one gamma chain. It depends on [4Fe-4S] cluster as a cofactor.

The protein is Pyruvate synthase subunit PorD (porD) of Thermotoga maritima (strain ATCC 43589 / DSM 3109 / JCM 10099 / NBRC 100826 / MSB8).